Consider the following 148-residue polypeptide: Putative nickel-responsive regulator (148 aa).

Ni(2+)-binding residues include His88, His99, His101, and Cys107.

It belongs to the transcriptional regulatory CopG/NikR family. The cofactor is Ni(2+).

Its function is as follows. Transcriptional regulator. The chain is Putative nickel-responsive regulator from Helicobacter pylori (strain P12).